Here is a 355-residue protein sequence, read N- to C-terminus: Phosphoribosylformylglycinamidine cyclo-ligase (355 aa).

It belongs to the AIR synthase family.

The protein localises to the cytoplasm. It catalyses the reaction 2-formamido-N(1)-(5-O-phospho-beta-D-ribosyl)acetamidine + ATP = 5-amino-1-(5-phospho-beta-D-ribosyl)imidazole + ADP + phosphate + H(+). Its pathway is purine metabolism; IMP biosynthesis via de novo pathway; 5-amino-1-(5-phospho-D-ribosyl)imidazole from N(2)-formyl-N(1)-(5-phospho-D-ribosyl)glycinamide: step 2/2. The polypeptide is Phosphoribosylformylglycinamidine cyclo-ligase (Paraburkholderia phytofirmans (strain DSM 17436 / LMG 22146 / PsJN) (Burkholderia phytofirmans)).